The chain runs to 377 residues: T-protein (377 aa).

One can recognise a Chorismate mutase domain in the interval Met1–Gly92. Positions His101 to Ser364 constitute a Prephenate/arogenate dehydrogenase domain.

The protein in the C-terminal section; belongs to the prephenate/arogenate dehydrogenase family.

It is found in the cytoplasm. It carries out the reaction chorismate = prephenate. The catalysed reaction is prephenate + NAD(+) = 3-(4-hydroxyphenyl)pyruvate + CO2 + NADH. It functions in the pathway amino-acid biosynthesis; L-tyrosine biosynthesis; (4-hydroxyphenyl)pyruvate from prephenate (NAD(+) route): step 1/1. It participates in metabolic intermediate biosynthesis; prephenate biosynthesis; prephenate from chorismate: step 1/1. This Haemophilus influenzae (strain ATCC 51907 / DSM 11121 / KW20 / Rd) protein is T-protein (tyrA).